A 454-amino-acid polypeptide reads, in one-letter code: Argininosuccinate lyase (454 aa).

This sequence belongs to the lyase 1 family. Argininosuccinate lyase subfamily.

Its subcellular location is the cytoplasm. It catalyses the reaction 2-(N(omega)-L-arginino)succinate = fumarate + L-arginine. The protein operates within amino-acid biosynthesis; L-arginine biosynthesis; L-arginine from L-ornithine and carbamoyl phosphate: step 3/3. The protein is Argininosuccinate lyase of Herpetosiphon aurantiacus (strain ATCC 23779 / DSM 785 / 114-95).